A 421-amino-acid chain; its full sequence is Histidine--tRNA ligase (421 aa).

It belongs to the class-II aminoacyl-tRNA synthetase family. In terms of assembly, homodimer.

The protein localises to the cytoplasm. The catalysed reaction is tRNA(His) + L-histidine + ATP = L-histidyl-tRNA(His) + AMP + diphosphate + H(+). The sequence is that of Histidine--tRNA ligase from Fervidobacterium nodosum (strain ATCC 35602 / DSM 5306 / Rt17-B1).